The sequence spans 447 residues: Alpha-1,3-mannosyl-glycoprotein 2-beta-N-acetylglucosaminyltransferase (447 aa).

At 1-6 (MLKKQS) the chain is on the cytoplasmic side. Residues 7 to 29 (AGLVLWGAILFVAWNALLLLFFW) form a helical; Signal-anchor for type II membrane protein membrane-spanning segment. The Lumenal portion of the chain corresponds to 30 to 447 (TRPVPSRLPS…TWDGYDPSWT (418 aa)). The cysteines at positions 115 and 145 are disulfide-linked. Substrate is bound by residues Arg-117, Asp-144, His-190, and Asp-212. Asp-213 serves as a coordination point for Mn(2+). An intrachain disulfide couples Cys-239 to Cys-305. Asp-291 acts as the Proton acceptor in catalysis. Substrate is bound at residue Ser-322.

The protein belongs to the glycosyltransferase 13 family. In terms of assembly, interacts with MGAT4D. Interacts with BRI3. Requires Mn(2+) as cofactor.

It localises to the golgi apparatus membrane. The protein resides in the cytoplasm. Its subcellular location is the perinuclear region. It carries out the reaction N(4)-(alpha-D-Man-(1-&gt;3)-[alpha-D-Man-(1-&gt;3)-[alpha-D-Man-(1-&gt;6)]-alpha-D-Man-(1-&gt;6)]-beta-D-Man-(1-&gt;4)-beta-D-GlcNAc-(1-&gt;4)-beta-D-GlcNAc)-L-asparaginyl-[protein] (N-glucan mannose isomer 5A1,2) + UDP-N-acetyl-alpha-D-glucosamine = N(4)-{beta-D-GlcNAc-(1-&gt;2)-alpha-D-Man-(1-&gt;3)-[alpha-D-Man-(1-&gt;3)-[alpha-D-Man-(1-&gt;6)]-alpha-D-Man-(1-&gt;6)]-beta-D-Man-(1-&gt;4)-beta-D-GlcNAc-(1-&gt;4)-beta-D-GlcNAc}-L-asparaginyl-[protein] + UDP + H(+). Its pathway is protein modification; protein glycosylation. Functionally, initiates complex N-linked carbohydrate formation. Essential for the conversion of high-mannose to hybrid and complex N-glycans. The protein is Alpha-1,3-mannosyl-glycoprotein 2-beta-N-acetylglucosaminyltransferase (MGAT1) of Oryctolagus cuniculus (Rabbit).